The following is a 388-amino-acid chain: Putative N(4)-(beta-N-acetylglucosaminyl)-L-asparaginase GL17147 (388 aa).

Positions 1 to 20 (MYKAQYLWLFGLVLISRSAT) are cleaved as a signal peptide. 2 disulfides stabilise this stretch: Cys94–Cys99 and Cys193–Cys209. The Nucleophile role is filled by Thr240. Substrate is bound by residues 268–271 (RVGD) and 291–294 (TGDG). Cysteines 351 and 378 form a disulfide.

The protein belongs to the Ntn-hydrolase family. Heterotetramer of two alpha and two beta chains arranged as a dimer of alpha/beta heterodimers. Post-translationally, cleaved into an alpha and beta chain by autocatalysis; this activates the enzyme. The N-terminal residue of the beta subunit is responsible for the nucleophile hydrolase activity.

The enzyme catalyses N(4)-(beta-N-acetyl-D-glucosaminyl)-L-asparagine + H2O = N-acetyl-beta-D-glucosaminylamine + L-aspartate + H(+). Its function is as follows. Cleaves the GlcNAc-Asn bond which joins oligosaccharides to the peptide of asparagine-linked glycoproteins. In Drosophila persimilis (Fruit fly), this protein is Putative N(4)-(beta-N-acetylglucosaminyl)-L-asparaginase GL17147.